The primary structure comprises 475 residues: Cytochrome c-552 (475 aa).

The first 29 residues, 1–29 (MSIKHWMSAPIAVATLFASQLLLAGSVLA), serve as a signal peptide directing secretion. The tract at residues 38-57 (PRNDAFEQKHPDQYHSWKAT) is disordered. His92 lines the heme c pocket. Cys120, Cys123, and Lys124 together coordinate heme. 6 residues coordinate heme c: Cys158, Cys161, His162, Cys207, Cys210, and His211. Residues Glu213, Tyr214, Lys259, and Gln261 each contribute to the Ca(2+) site. Residue Tyr214 coordinates substrate. His262 lines the substrate pocket. The heme c site is built by His273, Cys280, Cys283, His284, His299, Cys312, Cys315, His316, and His391.

The protein belongs to the cytochrome c-552 family. It depends on Ca(2+) as a cofactor. The cofactor is heme c.

Its subcellular location is the periplasm. The catalysed reaction is 6 Fe(III)-[cytochrome c] + NH4(+) + 2 H2O = 6 Fe(II)-[cytochrome c] + nitrite + 8 H(+). The protein operates within nitrogen metabolism; nitrate reduction (assimilation). In terms of biological role, catalyzes the reduction of nitrite to ammonia, consuming six electrons in the process. The protein is Cytochrome c-552 of Vibrio parahaemolyticus serotype O3:K6 (strain RIMD 2210633).